The chain runs to 96 residues: uncharacterized protein (96 aa).

The segment at 35–96 (SPSGEKRSTK…KKFSSPPHPK (62 aa)) is disordered. Residues 38-52 (GEKRSTKNQTKENTK) show a composition bias toward basic and acidic residues. Residues 69 to 80 (ANQQTNENSKPL) show a composition bias toward polar residues.

This is an uncharacterized protein from Dictyostelium discoideum (Social amoeba).